A 72-amino-acid polypeptide reads, in one-letter code: Cell division protein ZapB (72 aa).

Residues 5–71 (ILDQLEEKIK…LRSLLGQIDN (67 aa)) are a coiled coil.

Belongs to the ZapB family. In terms of assembly, homodimer. The ends of the coiled-coil dimer bind to each other, forming polymers. Interacts with FtsZ.

Its subcellular location is the cytoplasm. In terms of biological role, non-essential, abundant cell division factor that is required for proper Z-ring formation. It is recruited early to the divisome by direct interaction with FtsZ, stimulating Z-ring assembly and thereby promoting cell division earlier in the cell cycle. Its recruitment to the Z-ring requires functional FtsA or ZipA. The sequence is that of Cell division protein ZapB from Actinobacillus pleuropneumoniae serotype 5b (strain L20).